A 71-amino-acid chain; its full sequence is Conotoxin TxMMSK-05 (71 aa).

A signal peptide spans 1 to 20 (MMSKLGALLIICLLLFPLTA). Positions 21–52 (VPLDGDQHADRPAERLQDDISSKHHPMFDAVR) are excised as a propeptide. 3 disulfides stabilise this stretch: C54-C70, C55-C66, and C60-C69.

The protein belongs to the conotoxin M superfamily. Expressed by the venom duct.

Its subcellular location is the secreted. This Conus textile (Cloth-of-gold cone) protein is Conotoxin TxMMSK-05.